Reading from the N-terminus, the 382-residue chain is MKYELDKTSGNARRGRLVFERPQGTFSVETPAFMPVGTYGTVKGMTPEEVRATGAEILLGNTFHLWLRPGQEVMRKHGDLHDFMQWHRPILTDSGGFQVFSLGKLRKITEEGVKFQNPINGERIFLSPEKSMEIQYDLGSDIVMIFDECTPYPATFDYAKKSMEMSLRWAKRSRDRFDELGNKNALFGIIQGGVFEELRKVSLEGLVNIGFDGYAVGGLAVGEPKEDMHRILEYICPQIPADKPRYLMGVGKPEDLVEGVRRGIDMFDCVMPTRNARNGHLFVTDGIVKIRNAKYRDDTSPLDPECDCYTCKNYTKAYLYHLDKCGEILGARLNTIHNLRYYQRLMAEIRQAIEDDRFDDFVVEFYARMGKPVPPLQLADKS.

Aspartate 93 functions as the Proton acceptor in the catalytic mechanism. Substrate contacts are provided by residues aspartate 93–phenylalanine 97, aspartate 147, glutamine 191, and glycine 218. The RNA binding stretch occupies residues glycine 249 to aspartate 255. The Nucleophile role is filled by aspartate 268. The interval threonine 273 to arginine 277 is RNA binding; important for wobble base 34 recognition. Zn(2+) is bound by residues cysteine 306, cysteine 308, cysteine 311, and histidine 337.

Belongs to the queuine tRNA-ribosyltransferase family. Homodimer. Within each dimer, one monomer is responsible for RNA recognition and catalysis, while the other monomer binds to the replacement base PreQ1. The cofactor is Zn(2+).

The catalysed reaction is 7-aminomethyl-7-carbaguanine + guanosine(34) in tRNA = 7-aminomethyl-7-carbaguanosine(34) in tRNA + guanine. It functions in the pathway tRNA modification; tRNA-queuosine biosynthesis. Catalyzes the base-exchange of a guanine (G) residue with the queuine precursor 7-aminomethyl-7-deazaguanine (PreQ1) at position 34 (anticodon wobble position) in tRNAs with GU(N) anticodons (tRNA-Asp, -Asn, -His and -Tyr). Catalysis occurs through a double-displacement mechanism. The nucleophile active site attacks the C1' of nucleotide 34 to detach the guanine base from the RNA, forming a covalent enzyme-RNA intermediate. The proton acceptor active site deprotonates the incoming PreQ1, allowing a nucleophilic attack on the C1' of the ribose to form the product. After dissociation, two additional enzymatic reactions on the tRNA convert PreQ1 to queuine (Q), resulting in the hypermodified nucleoside queuosine (7-(((4,5-cis-dihydroxy-2-cyclopenten-1-yl)amino)methyl)-7-deazaguanosine). This chain is Queuine tRNA-ribosyltransferase, found in Haemophilus influenzae (strain ATCC 51907 / DSM 11121 / KW20 / Rd).